The primary structure comprises 375 residues: Growth/differentiation factor 8 (375 aa).

Residues 1–18 (MQRLQICVYIYLFVLIVA) form the signal peptide. The propeptide occupies 19–266 (GPVDLSENSE…VTDTPKRSRR (248 aa)). N-linked (GlcNAc...) asparagine glycosylation occurs at asparagine 71. Intrachain disulfides connect cysteine 281-cysteine 340, cysteine 309-cysteine 372, and cysteine 313-cysteine 374.

It belongs to the TGF-beta family. In terms of assembly, homodimer; disulfide-linked. Interacts with WFIKKN2, leading to inhibit its activity. Interacts with FSTL3. Post-translationally, synthesized as large precursor molecule that undergoes proteolytic cleavage to generate an N-terminal propeptide and a disulfide linked C-terminal dimer, which is the biologically active molecule. The circulating form consists of a latent complex of the C-terminal dimer and other proteins, including its propeptide, which maintain the C-terminal dimer in a latent, inactive state. Ligand activation requires additional cleavage of the prodomain by a tolloid-like metalloproteinase.

The protein resides in the secreted. Its function is as follows. Acts specifically as a negative regulator of skeletal muscle growth. This is Growth/differentiation factor 8 (MSTN) from Vulpes vulpes (Red fox).